A 190-amino-acid polypeptide reads, in one-letter code: MTYEIQASVREAQGTGASRRLRREGQIPGILYGEGQEPVAIAVDHKTVFYALEKESFHTALIKLSLNGETKDVIVRDFQMHPFRREVQHIDFQAVKADQPVRIRVPLHIVNAENSQAVKLQGGRVSLLNTTVEVVALPANIPAFLDLDCAEVVAGDILHLSDIKLPEGVESVSLKRNENLAVATVTGKKR.

This sequence belongs to the bacterial ribosomal protein bL25 family. CTC subfamily. As to quaternary structure, part of the 50S ribosomal subunit; part of the 5S rRNA/L5/L18/L25 subcomplex. Contacts the 5S rRNA. Binds to the 5S rRNA independently of L5 and L18.

This is one of the proteins that binds to the 5S RNA in the ribosome where it forms part of the central protuberance. The sequence is that of Large ribosomal subunit protein bL25 from Neisseria meningitidis serogroup A / serotype 4A (strain DSM 15465 / Z2491).